The chain runs to 753 residues: 5-methyltetrahydropteroyltriglutamate--homocysteine methyltransferase (753 aa).

5-methyltetrahydropteroyltri-L-glutamate is bound by residues 17-20 (RELK) and Lys-117. L-homocysteine contacts are provided by residues 431-433 (IGS) and Glu-484. L-methionine is bound by residues 431 to 433 (IGS) and Glu-484. Residues 515 to 516 (RC) and Trp-561 contribute to the 5-methyltetrahydropteroyltri-L-glutamate site. Position 599 (Asp-599) interacts with L-homocysteine. Position 599 (Asp-599) interacts with L-methionine. Glu-605 contacts 5-methyltetrahydropteroyltri-L-glutamate. Positions 641, 643, and 665 each coordinate Zn(2+). The active-site Proton donor is the His-694. Cys-726 is a Zn(2+) binding site.

The protein belongs to the vitamin-B12 independent methionine synthase family. Requires Zn(2+) as cofactor.

It carries out the reaction 5-methyltetrahydropteroyltri-L-glutamate + L-homocysteine = tetrahydropteroyltri-L-glutamate + L-methionine. It participates in amino-acid biosynthesis; L-methionine biosynthesis via de novo pathway; L-methionine from L-homocysteine (MetE route): step 1/1. Catalyzes the transfer of a methyl group from 5-methyltetrahydrofolate to homocysteine resulting in methionine formation. This Escherichia coli O157:H7 (strain EC4115 / EHEC) protein is 5-methyltetrahydropteroyltriglutamate--homocysteine methyltransferase.